A 544-amino-acid chain; its full sequence is Chaperonin GroEL 2 (544 aa).

ATP-binding positions include 29–32, 86–90, Gly-413, 479–481, and Asp-495; these read TLGP, DGTTT, and NAA.

Belongs to the chaperonin (HSP60) family. As to quaternary structure, forms a cylinder of 14 subunits composed of two heptameric rings stacked back-to-back. Interacts with the co-chaperonin GroES.

It localises to the cytoplasm. The enzyme catalyses ATP + H2O + a folded polypeptide = ADP + phosphate + an unfolded polypeptide.. Together with its co-chaperonin GroES, plays an essential role in assisting protein folding. The GroEL-GroES system forms a nano-cage that allows encapsulation of the non-native substrate proteins and provides a physical environment optimized to promote and accelerate protein folding. The protein is Chaperonin GroEL 2 of Trichodesmium erythraeum (strain IMS101).